Here is a 273-residue protein sequence, read N- to C-terminus: Shikimate dehydrogenase (NADP(+)) (273 aa).

Shikimate contacts are provided by residues 15–17 (SLS) and Thr62. The active-site Proton acceptor is Lys66. Glu78 is a binding site for NADP(+). The shikimate site is built by Asn87 and Asp102. NADP(+) contacts are provided by residues 126–130 (GAGGA), 150–155 (NRTIEK), and Ile217. Tyr219 is a binding site for shikimate. NADP(+) is bound at residue Gly240.

Belongs to the shikimate dehydrogenase family. Homodimer.

It catalyses the reaction shikimate + NADP(+) = 3-dehydroshikimate + NADPH + H(+). Its pathway is metabolic intermediate biosynthesis; chorismate biosynthesis; chorismate from D-erythrose 4-phosphate and phosphoenolpyruvate: step 4/7. Involved in the biosynthesis of the chorismate, which leads to the biosynthesis of aromatic amino acids. Catalyzes the reversible NADPH linked reduction of 3-dehydroshikimate (DHSA) to yield shikimate (SA). This chain is Shikimate dehydrogenase (NADP(+)), found in Nitrosopumilus maritimus (strain SCM1).